A 291-amino-acid polypeptide reads, in one-letter code: MFEGVLPAIVTPFQNDHAKSLDLLGLQSNLAFLVSKGVHGVVPCGSTGESATLSFEEHVKVIEATIEAVAGKVPVLAGAGSNNTDEAIRFTRSAKDLGADGVLIISPYYNRPNRSGLIKHFSAIADLDIPVVLYNVPSRTGQNLSPDLVAELSRHPNIVGIKEASGNISQVSQIIEETMDQDFTVISGDDGMTLPVMALGGGGVISVAANVEPERMVGMYRAYTEGDWDDAISLHYELAPLFRALFIDSNPIPVKKAINLRGLASGPLRLPLDELDAEKTAALTEVLSTYD.

Threonine 47 serves as a coordination point for pyruvate. The Proton donor/acceptor role is filled by tyrosine 134. Lysine 162 (schiff-base intermediate with substrate) is an active-site residue. Isoleucine 205 contacts pyruvate.

The protein belongs to the DapA family. As to quaternary structure, homotetramer; dimer of dimers.

The protein localises to the cytoplasm. It catalyses the reaction L-aspartate 4-semialdehyde + pyruvate = (2S,4S)-4-hydroxy-2,3,4,5-tetrahydrodipicolinate + H2O + H(+). Its pathway is amino-acid biosynthesis; L-lysine biosynthesis via DAP pathway; (S)-tetrahydrodipicolinate from L-aspartate: step 3/4. Its function is as follows. Catalyzes the condensation of (S)-aspartate-beta-semialdehyde [(S)-ASA] and pyruvate to 4-hydroxy-tetrahydrodipicolinate (HTPA). The chain is 4-hydroxy-tetrahydrodipicolinate synthase from Methanosphaerula palustris (strain ATCC BAA-1556 / DSM 19958 / E1-9c).